Consider the following 236-residue polypeptide: Probable ascorbate-specific transmembrane electron transporter 2 (236 aa).

Over 1–11 the chain is Cytoplasmic; sequence MAAGLGVKAAP. The chain crosses the membrane as a helical span at residues 12-32; it reads FTYVAHALAVAAAVMVLVWCI. The Cytochrome b561 domain occupies 15-219; the sequence is VAHALAVAAA…FGAAVVVAAV (205 aa). Residues 33–53 lie on the Extracellular side of the membrane; that stretch reads SFRGGLAFEADNKNLIFNVHP. His52 is a binding site for heme b. The helical transmembrane segment at 54 to 74 threads the bilayer; it reads VLMLIGYIILGSEAIMIYKIF. 67–75 lines the L-ascorbate pocket; that stretch reads AIMIYKIFP. Residues 75 to 84 lie on the Cytoplasmic side of the membrane; the sequence is PKLNHDTTKL. The chain crosses the membrane as a helical span at residues 85–105; that stretch reads IHLILHAIAIVLGAVGIYCAF. 2 residues coordinate heme b: His86 and His120. Residues 106-122 lie on the Extracellular side of the membrane; it reads KFHNESGIANLYSLHSW. 116–125 provides a ligand contact to monodehydro-L-ascorbate radical; the sequence is LYSLHSWLGI. A helical transmembrane segment spans residues 123–143; sequence LGIGTISLYGIQWIFGFVAFF. At 144-153 the chain is on the cytoplasmic side; it reads YPGAAPHVRR. Residues 154-174 form a helical membrane-spanning segment; it reads GALPWHVLFGLFVYVLTLATA. His159 serves as a coordination point for heme b. Residues 175-196 are Extracellular-facing; the sequence is ELGLLEKLTFLQSSGLDKYGAE. A helical membrane pass occupies residues 197–217; it reads AFLVNFTGLVVALFGAAVVVA. At 218–236 the chain is on the cytoplasmic side; it reads AVAPAHVEEPEGYAPIPVN.

Heme b is required as a cofactor.

It is found in the membrane. Two-heme-containing cytochrome. Catalyzes ascorbate-dependent trans-membrane electron transfer by utilizing a concerted H(+)/e(-) transfer mechanism. The polypeptide is Probable ascorbate-specific transmembrane electron transporter 2 (Oryza sativa subsp. japonica (Rice)).